The sequence spans 503 residues: Maturase K (503 aa).

It belongs to the intron maturase 2 family. MatK subfamily.

It is found in the plastid. The protein resides in the chloroplast. Functionally, usually encoded in the trnK tRNA gene intron. Probably assists in splicing its own and other chloroplast group II introns. The sequence is that of Maturase K from Diospyros virginiana (American persimmon).